The chain runs to 596 residues: NADH-quinone oxidoreductase subunit C/D (596 aa).

The NADH dehydrogenase I subunit C stretch occupies residues 1–186 (MTDLTAQDAA…DPFELTKAKQ (186 aa)). The tract at residues 210 to 596 (DFMFLNLGPN…IDFVMSDVDR (387 aa)) is NADH dehydrogenase I subunit D.

In the N-terminal section; belongs to the complex I 30 kDa subunit family. The protein in the C-terminal section; belongs to the complex I 49 kDa subunit family. NDH-1 is composed of 13 different subunits. Subunits NuoB, CD, E, F, and G constitute the peripheral sector of the complex.

The protein localises to the cell inner membrane. The enzyme catalyses a quinone + NADH + 5 H(+)(in) = a quinol + NAD(+) + 4 H(+)(out). Functionally, NDH-1 shuttles electrons from NADH, via FMN and iron-sulfur (Fe-S) centers, to quinones in the respiratory chain. The immediate electron acceptor for the enzyme in this species is believed to be ubiquinone. Couples the redox reaction to proton translocation (for every two electrons transferred, four hydrogen ions are translocated across the cytoplasmic membrane), and thus conserves the redox energy in a proton gradient. The polypeptide is NADH-quinone oxidoreductase subunit C/D (Salmonella dublin (strain CT_02021853)).